The following is a 209-amino-acid chain: Fibroblast growth factor 10 (209 aa).

Residues 1–36 form the signal peptide; it reads MWKWILTHCASAFPHLPGCCCCFLLLFLVSSFPVTC. N-linked (GlcNAc...) asparagine glycosylation is found at Asn50 and Asn197.

It belongs to the heparin-binding growth factors family. As to quaternary structure, interacts with FGFR1 and FGFR2. Interacts with FGFBP1. As to expression, expressed abundantly in embryos and the lung, and at much lower levels in brain and heart.

It is found in the secreted. Its function is as follows. Plays an important role in the regulation of embryonic development, cell proliferation and cell differentiation. Required for normal branching morphogenesis. May play a role in wound healing. This chain is Fibroblast growth factor 10 (Fgf10), found in Mus musculus (Mouse).